We begin with the raw amino-acid sequence, 28 residues long: Dermaseptin-6TR (28 aa).

Expressed by the skin glands.

The protein resides in the secreted. Has antimicrobial activity. The sequence is that of Dermaseptin-6TR from Phyllomedusa trinitatis (Trinidad leaf frog).